A 462-amino-acid polypeptide reads, in one-letter code: Steroidogenic factor 1 (462 aa).

Residues 10–85 (DELCPVCGDK…VGMRLEAVRA (76 aa)) constitute a DNA-binding region (nuclear receptor). The segment at 13-33 (CPVCGDKVSGYHYGLLTCESC) adopts an NR C4-type zinc-finger fold. N6-acetyllysine is present on residues K34, K38, and K72. An NR C4-type zinc finger spans residues 49–73 (CTESQSCKIDKTQRKRCPFCRFQKC). The segment at 117–149 (GFKLETGPPMGVPPPPPPPPDYMLPPSLHAPEP) is disordered. A Glycyl lysine isopeptide (Lys-Gly) (interchain with G-Cter in SUMO) cross-link involves residue K119. Residues 126–139 (MGVPPPPPPPPDYM) show a composition bias toward pro residues. K194 participates in a covalent cross-link: Glycyl lysine isopeptide (Lys-Gly) (interchain with G-Cter in SUMO). S203 carries the phosphoserine; by CDK7 modification. Residues 223-460 (NVPELILQLL…NLLIEMLQAK (238 aa)) enclose the NR LBD domain. A 1,2-diacyl-sn-glycero-3-phosphocholine is bound by residues G342, Y437, and K441.

The protein belongs to the nuclear hormone receptor family. NR5 subfamily. As to quaternary structure, binds DNA as a monomer. Part of a complex consisting of SFPQ, NONO and NR5A1. Interacts with NR0B2, NCOA2 and PPARGC1A. Interacts with DGKQ and CDK7. Binds to and activated by HIPK3. Acetylation stimulates the transcriptional activity. Post-translationally, sumoylation reduces CDK7-mediated phosphorylation on Ser-203. In terms of processing, phosphorylated on Ser-203 by CDK7. This phosphorylation promotes transcriptional activity.

It localises to the nucleus. Functionally, transcriptional activator. Seems to be essential for sexual differentiation and formation of the primary steroidogenic tissues. Binds to the Ad4 site found in the promoter region of steroidogenic P450 genes such as CYP11A, CYP11B and CYP21B. Also regulates the AMH/Muellerian inhibiting substance gene as well as the AHCH and STAR genes. 5'-YCAAGGYC-3' and 5'-RRAGGTCA-3' are the consensus sequences for the recognition by NR5A1. The SFPQ-NONO-NR5A1 complex binds to the CYP17 promoter and regulates basal and cAMP-dependent transcriptional activity. Binds phosphatidylcholine and phospholipids with a phosphatidylinositol (PI) headgroup, in particular PI(3,4)P2 and PI(3,4,5)P3. Activated by the phosphorylation of NR5A1 by HIPK3 leading to increased steroidogenic gene expression upon cAMP signaling pathway stimulation. This chain is Steroidogenic factor 1 (Nr5a1), found in Rattus norvegicus (Rat).